A 457-amino-acid polypeptide reads, in one-letter code: MGAPTFHIAMYPWFALGHLTPFLHLSNKLARKGHKISFLIPTKTQQKLEPFNLHPDLITFIPVTVPHVDGLPLGAETTSDVPYPLQTLLMTAMDRTEKYVEDVFLGLKVDVVFFDFTHWMPSVAKRLGIKSVNYCIISPATIGYTMSPARQLQGRELTEADLMVTPLGYPDSSIRLRTHEARAFAARRVMKFGGDTRFCDRNFISFSECDAMGFKTCREIEGPYCDFLESQFEKPVLLSGPVIPEPPTSPLEEIWAKWLGGFRDGSVIYCAFGSECTLKMNQFQELLLGLVLTGMPFLAVLKPPIGAKSVEEALPEKFETSVEGRGVVHEGWVQQQLILEHPSVGCFITHCGSGSLSEALFNKCQLVLLPNVGDQIINARMMSQNLKVGVEVEKGEEDGLFTGESVCRAVRDAMEEGSEVAKEVRDNHAKMREFLLNKDLESSYIDNFNKKLQDLLG.

Belongs to the UDP-glycosyltransferase family. In terms of tissue distribution, expressed in ovaries.

It catalyses the reaction cyanidin 3-O-beta-D-galactoside + UDP-alpha-D-xylose = cyanidin 3-O-[beta-D-xylosyl-(1-&gt;2)-beta-D-galactoside] + UDP + H(+). The protein operates within pigment biosynthesis; anthocyanin biosynthesis. Functionally, xylosyltransferase involved in anthocyanin biosynthesis by catalyzing the xylosylation of cyanidin 3-O-galactoside to form cyanidin 3-O-[2-O-(-xylosyl)-galactoside]. Required for the accumulation of anthocyanin in red-fleshed kiwifruit varieties. The polypeptide is Cyanidin 3-O-galactoside 2''-O-xylosyltransferase FGGT1 (Actinidia chinensis var. chinensis (Chinese soft-hair kiwi)).